A 230-amino-acid polypeptide reads, in one-letter code: Protein GrpE (230 aa).

Disordered regions lie at residues 1–26 and 209–230; these read MADE…DREA and GVSK…EDNA. Polar residues predominate over residues 221 to 230; the sequence is NGASTSEDNA.

Belongs to the GrpE family. Homodimer.

The protein localises to the cytoplasm. Participates actively in the response to hyperosmotic and heat shock by preventing the aggregation of stress-denatured proteins, in association with DnaK and GrpE. It is the nucleotide exchange factor for DnaK and may function as a thermosensor. Unfolded proteins bind initially to DnaJ; upon interaction with the DnaJ-bound protein, DnaK hydrolyzes its bound ATP, resulting in the formation of a stable complex. GrpE releases ADP from DnaK; ATP binding to DnaK triggers the release of the substrate protein, thus completing the reaction cycle. Several rounds of ATP-dependent interactions between DnaJ, DnaK and GrpE are required for fully efficient folding. The sequence is that of Protein GrpE from Brucella suis biovar 1 (strain 1330).